A 372-amino-acid polypeptide reads, in one-letter code: Cytochrome b (372 aa).

4 helical membrane-spanning segments follow: residues 25–45, 69–90, 105–125, and 170–190; these read FGSM…FLAI, WIMQ…YTHI, WLSG…GYVL, and FFAL…VHII. H75 and H89 together coordinate heme b. Residues H174 and H188 each contribute to the heme b site. H193 is an a ubiquinone binding site. 4 helical membrane-spanning segments follow: residues 218-238, 280-300, 312-332, and 339-358; these read YKDM…LSFS, LGGT…PFTH, LSQI…WTAS, and FITI…ILTP.

It belongs to the cytochrome b family. As to quaternary structure, the cytochrome bc1 complex contains 3 respiratory subunits (MT-CYB, CYC1 and UQCRFS1), 2 core proteins (UQCRC1 and UQCRC2) and probably 6 low-molecular weight proteins. Heme b is required as a cofactor.

It is found in the mitochondrion inner membrane. Component of the ubiquinol-cytochrome c reductase complex (complex III or cytochrome b-c1 complex) that is part of the mitochondrial respiratory chain. The b-c1 complex mediates electron transfer from ubiquinol to cytochrome c. Contributes to the generation of a proton gradient across the mitochondrial membrane that is then used for ATP synthesis. The polypeptide is Cytochrome b (MT-CYB) (Naja kaouthia (Monocled cobra)).